The following is an 81-amino-acid chain: Large ribosomal subunit protein bL31B (81 aa).

It belongs to the bacterial ribosomal protein bL31 family. Type B subfamily. As to quaternary structure, part of the 50S ribosomal subunit.

The protein is Large ribosomal subunit protein bL31B of Bacillus licheniformis (strain ATCC 14580 / DSM 13 / JCM 2505 / CCUG 7422 / NBRC 12200 / NCIMB 9375 / NCTC 10341 / NRRL NRS-1264 / Gibson 46).